The sequence spans 352 residues: Glycerol-1-phosphate dehydrogenase [NAD(P)+] (352 aa).

Residues 99–103 (GAKID) and 121–124 (TAPS) each bind NAD(+). Aspartate 126 is a substrate binding site. Serine 130 serves as a coordination point for NAD(+). Substrate is bound at residue aspartate 173. Zn(2+) contacts are provided by aspartate 173 and histidine 253. Position 257 (histidine 257) interacts with substrate. Histidine 269 serves as a coordination point for Zn(2+).

The protein belongs to the glycerol-1-phosphate dehydrogenase family. Requires Zn(2+) as cofactor.

It localises to the cytoplasm. The catalysed reaction is sn-glycerol 1-phosphate + NAD(+) = dihydroxyacetone phosphate + NADH + H(+). It carries out the reaction sn-glycerol 1-phosphate + NADP(+) = dihydroxyacetone phosphate + NADPH + H(+). Its pathway is membrane lipid metabolism; glycerophospholipid metabolism. Its function is as follows. Catalyzes the NAD(P)H-dependent reduction of dihydroxyacetonephosphate (DHAP or glycerone phosphate) to glycerol 1-phosphate (G1P). The G1P thus generated is used as the glycerophosphate backbone of phospholipids in the cellular membranes of Archaea. The polypeptide is Glycerol-1-phosphate dehydrogenase [NAD(P)+] (Thermoplasma acidophilum (strain ATCC 25905 / DSM 1728 / JCM 9062 / NBRC 15155 / AMRC-C165)).